A 264-amino-acid chain; its full sequence is 3-methyl-2-oxobutanoate hydroxymethyltransferase (264 aa).

Asp-45 and Asp-84 together coordinate Mg(2+). Residues 45–46, Asp-84, and Lys-112 each bind 3-methyl-2-oxobutanoate; that span reads DS. Mg(2+) is bound at residue Glu-114. The active-site Proton acceptor is Glu-181.

Belongs to the PanB family. In terms of assembly, homodecamer; pentamer of dimers. Mg(2+) is required as a cofactor.

It localises to the cytoplasm. It carries out the reaction 3-methyl-2-oxobutanoate + (6R)-5,10-methylene-5,6,7,8-tetrahydrofolate + H2O = 2-dehydropantoate + (6S)-5,6,7,8-tetrahydrofolate. It participates in cofactor biosynthesis; (R)-pantothenate biosynthesis; (R)-pantoate from 3-methyl-2-oxobutanoate: step 1/2. Catalyzes the reversible reaction in which hydroxymethyl group from 5,10-methylenetetrahydrofolate is transferred onto alpha-ketoisovalerate to form ketopantoate. The protein is 3-methyl-2-oxobutanoate hydroxymethyltransferase of Shigella dysenteriae serotype 1 (strain Sd197).